The chain runs to 485 residues: Serine/threonine-protein kinase 4 (485 aa).

The region spanning 30-281 is the Protein kinase domain; that stretch reads FDVLEKLGEG…ATELLQHPFI (252 aa). ATP is bound by residues 36-44 and K59; that span reads LGEGSYGSV. D149 (proton acceptor) is an active-site residue. Phosphothreonine; by autocatalysis is present on T183. The stretch at 287-313 forms a coiled coil; it reads ESILRHLINEAQDAKLKRTELKQREVE. An SARAH domain is found at 431-478; it reads YSFLKDWSVTELQLRLNSLDPMMEQEIEEIHHKYQAKRQPILEAIESK.

It belongs to the protein kinase superfamily. STE Ser/Thr protein kinase family. STE20 subfamily. As to quaternary structure, homodimer; mediated via the coiled-coil region. The cofactor is Mg(2+). Autophosphorylated on Thr-183. In terms of processing, proteolytically cleaved by caspase-3 during apoptosis at Asp-326 resulting in a 37 kDa form. Proteolytic cleavage results in kinase activation and nuclear translocation of the truncated form (MST1/N).

It is found in the cytoplasm. The protein localises to the nucleus. It carries out the reaction L-seryl-[protein] + ATP = O-phospho-L-seryl-[protein] + ADP + H(+). The catalysed reaction is L-threonyl-[protein] + ATP = O-phospho-L-threonyl-[protein] + ADP + H(+). The C-terminal non-catalytic region inhibits the kinase activity, the enzyme is activated by caspase-cleavage. Homodimerization and autophosphorylation of Thr-183 is also required for full activation. Its function is as follows. Stress-activated, pro-apoptotic kinase which, following caspase-cleavage, enters the nucleus and induces chromatin condensation followed by internucleosomal DNA fragmentation. Key component of the Hippo signaling pathway which plays a pivotal role in organ size control and tumor suppression by restricting proliferation and promoting apoptosis. The core of this pathway is composed of a kinase cascade wherein stk3/mst2 and stk4/mst1, in complex with its regulatory protein sav1, phosphorylates and activates lats1/2 in complex with its regulatory protein mob1, which in turn phosphorylates and inactivates yap1 oncoprotein and wwtr1/taz. Phosphorylation of yap1 by lats2 inhibits its translocation into the nucleus to regulate cellular genes important for cell proliferation, cell death, and cell migration. Phosphorylates 'Ser-14' of histone H2B (H2BS14ph) during apoptosis. The sequence is that of Serine/threonine-protein kinase 4 (stk4) from Xenopus tropicalis (Western clawed frog).